The following is a 125-amino-acid chain: uncharacterized protein (125 aa).

This is an uncharacterized protein from Methanocaldococcus jannaschii (strain ATCC 43067 / DSM 2661 / JAL-1 / JCM 10045 / NBRC 100440) (Methanococcus jannaschii).